The sequence spans 189 residues: Potassium-transporting ATPase KdpC subunit (189 aa).

A helical transmembrane segment spans residues 5 to 25; that stretch reads LLPALTMLLVFTVITGIVYPL.

It belongs to the KdpC family. As to quaternary structure, the system is composed of three essential subunits: KdpA, KdpB and KdpC.

It is found in the cell membrane. Part of the high-affinity ATP-driven potassium transport (or Kdp) system, which catalyzes the hydrolysis of ATP coupled with the electrogenic transport of potassium into the cytoplasm. This subunit acts as a catalytic chaperone that increases the ATP-binding affinity of the ATP-hydrolyzing subunit KdpB by the formation of a transient KdpB/KdpC/ATP ternary complex. The protein is Potassium-transporting ATPase KdpC subunit of Mycobacterium bovis (strain ATCC BAA-935 / AF2122/97).